We begin with the raw amino-acid sequence, 140 residues long: Large ribosomal subunit protein uL11 (140 aa).

This sequence belongs to the universal ribosomal protein uL11 family. In terms of assembly, part of the ribosomal stalk of the 50S ribosomal subunit. Interacts with L10 and the large rRNA to form the base of the stalk. L10 forms an elongated spine to which L12 dimers bind in a sequential fashion forming a multimeric L10(L12)X complex. In terms of processing, one or more lysine residues are methylated.

In terms of biological role, forms part of the ribosomal stalk which helps the ribosome interact with GTP-bound translation factors. The sequence is that of Large ribosomal subunit protein uL11 from Caldanaerobacter subterraneus subsp. tengcongensis (strain DSM 15242 / JCM 11007 / NBRC 100824 / MB4) (Thermoanaerobacter tengcongensis).